A 380-amino-acid chain; its full sequence is Cytochrome b (380 aa).

4 consecutive transmembrane segments (helical) span residues I28–L48, W72–I93, W109–L129, and F174–L194. Positions 78 and 92 each coordinate heme b. Positions 178 and 192 each coordinate heme b. H197 is a binding site for a ubiquinone. Helical transmembrane passes span W222–T243, I285–L305, I317–A337, and Y344–I364.

Belongs to the cytochrome b family. As to quaternary structure, the main subunits of complex b-c1 are: cytochrome b, cytochrome c1 and the Rieske protein. Requires heme b as cofactor.

The protein resides in the mitochondrion inner membrane. Component of the ubiquinol-cytochrome c reductase complex (complex III or cytochrome b-c1 complex) that is part of the mitochondrial respiratory chain. The b-c1 complex mediates electron transfer from ubiquinol to cytochrome c. Contributes to the generation of a proton gradient across the mitochondrial membrane that is then used for ATP synthesis. The protein is Cytochrome b (MT-CYB) of Cepaea nemoralis (Banded wood snail).